We begin with the raw amino-acid sequence, 379 residues long: Cytochrome b (379 aa).

Helical transmembrane passes span 33–53 (FGSLLGLCLIAQILTGLFLAM), 77–98 (WLIRNMHANGASFFFICIYLHI), 113–133 (WNVGVVLLLLVMMTAFVGYVL), and 178–198 (FFAFHFLLPFIGAAATLVHLI). Residues histidine 83 and histidine 97 each contribute to the heme b site. Heme b-binding residues include histidine 182 and histidine 196. Histidine 201 is a binding site for a ubiquinone. Helical transmembrane passes span 226–246 (YKDILGFTFLLTALIALALFS), 288–308 (LGGVLALLASILVLMVVPLLH), 320–340 (FTQVLFWLLIADVAILTWIGG), and 347–367 (FIIIGQVASFLYFSLFLVLAP).

The protein belongs to the cytochrome b family. In terms of assembly, the cytochrome bc1 complex contains 3 respiratory subunits (MT-CYB, CYC1 and UQCRFS1), 2 core proteins (UQCRC1 and UQCRC2) and probably 6 low-molecular weight proteins. Heme b is required as a cofactor.

Its subcellular location is the mitochondrion inner membrane. In terms of biological role, component of the ubiquinol-cytochrome c reductase complex (complex III or cytochrome b-c1 complex) that is part of the mitochondrial respiratory chain. The b-c1 complex mediates electron transfer from ubiquinol to cytochrome c. Contributes to the generation of a proton gradient across the mitochondrial membrane that is then used for ATP synthesis. This Poeciliopsis occidentalis (Gila topminnow) protein is Cytochrome b (mt-cyb).